Here is a 393-residue protein sequence, read N- to C-terminus: Transcription factor bHLH112 (393 aa).

2 disordered regions span residues 248–277 and 332–356; these read TRAQ…SPLP and KQGA…NENH. Residues 254 to 265 show a composition bias toward basic and acidic residues; the sequence is SLKRAKDNESAA. The bHLH domain occupies 270–319; it reads VTTPSPLPTFKVRKENLRDQITSLQQLVSPFGKTDTASVLQEAIEYIKFL. A compositionally biased stretch (low complexity) spans 332–347; sequence KQGASNQQQQQISGKS.

Homodimer.

Its subcellular location is the nucleus. The polypeptide is Transcription factor bHLH112 (BHLH112) (Arabidopsis thaliana (Mouse-ear cress)).